The chain runs to 260 residues: Hydroxypyruvate/pyruvate aldolase Bphyt_0320 (260 aa).

Catalysis depends on His48, which acts as the Proton acceptor. Positions 157 and 183 each coordinate a divalent metal cation.

It belongs to the HpcH/HpaI aldolase family. It depends on Mn(2+) as a cofactor. The cofactor is Mg(2+). Co(2+) is required as a cofactor.

It catalyses the reaction D-glyceraldehyde + 3-hydroxypyruvate = 2-dehydro-D-gluconate. The enzyme catalyses D-glyceraldehyde + pyruvate = 2-dehydro-3-deoxy-L-galactonate. The catalysed reaction is 2-dehydro-3-deoxy-D-gluconate = D-glyceraldehyde + pyruvate. Aldolase which can catalyze in vitro the aldolisation reaction between hydroxypyruvate (HPA) or pyruvate (PA) and D-glyceraldehyde (D-GA). The condensation of hydroxypyruvate and D-glyceraldehyde produces 2-dehydro-D-gluconate. The condensation of pyruvate and D-glyceraldehyde produces 2-dehydro-3-deoxy-L-galactonate as the major product and 2-dehydro-3-deoxy-D-gluconate. Also catalyzes the retro-aldol type decarboxylation of oxaloacetate, a general property of known pyruvate aldolases. The sequence is that of Hydroxypyruvate/pyruvate aldolase Bphyt_0320 from Paraburkholderia phytofirmans (strain DSM 17436 / LMG 22146 / PsJN) (Burkholderia phytofirmans).